Reading from the N-terminus, the 496-residue chain is Signal recognition particle subunit SRP54 1 (496 aa).

The tract at residues 1–296 (MVLAQLGGSI…DVKPFVSRLL (296 aa)) is G-domain. Residues 108 to 115 (GLQGSGKT), 191 to 195 (DTSGR), and 249 to 252 (TKMD) contribute to the GTP site. The interval 297 to 496 (GMGDLSGLVN…MGMFGGGGGE (200 aa)) is M-domain.

It belongs to the GTP-binding SRP family. SRP54 subfamily. Component of a signal recognition particle (SRP) complex that consists of a 7SL RNA molecule of 300 nucleotides and six protein subunits: SRP72, SRP68, SRP54, SRP19, SRP14 and SRP9.

It is found in the cytoplasm. The protein localises to the endoplasmic reticulum. It carries out the reaction GTP + H2O = GDP + phosphate + H(+). Its function is as follows. Component of the signal recognition particle (SRP) complex, a ribonucleoprotein complex that mediates the cotranslational targeting of secretory and membrane proteins to the endoplasmic reticulum (ER). As part of the SRP complex, associates with the SRP receptor (SR) component SRPRA to target secretory proteins to the endoplasmic reticulum membrane. Binds to the signal sequence of presecretory proteins when they emerge from the ribosomes. Displays basal GTPase activity, and stimulates reciprocal GTPase activation of the SR subunit SRPRA. Forms a guanosine 5'-triphosphate (GTP)-dependent complex with the SR subunit SRPRA. SR compaction and GTPase mediated rearrangement of SR drive SRP-mediated cotranslational protein translocation into the ER. Requires the presence of SRP9/SRP14 and/or SRP19 to stably interact with RNA. The protein is Signal recognition particle subunit SRP54 1 of Solanum lycopersicum (Tomato).